We begin with the raw amino-acid sequence, 102 residues long: 10 kDa heat shock protein, mitochondrial (102 aa).

Ala-2 is subject to N-acetylalanine. The residue at position 8 (Lys-8) is an N6-acetyllysine. Residue Lys-28 is modified to N6-succinyllysine. Lys-40 carries the post-translational modification N6-acetyllysine; alternate. An N6-malonyllysine; alternate mark is found at Lys-40, Lys-54, and Lys-56. An N6-succinyllysine; alternate mark is found at Lys-40, Lys-54, Lys-56, Lys-66, and Lys-70. N6-acetyllysine; alternate is present on residues Lys-56, Lys-66, and Lys-70. Phosphothreonine is present on Thr-79. N6-acetyllysine; alternate occurs at positions 80 and 86. 2 positions are modified to N6-succinyllysine; alternate: Lys-80 and Lys-86. At Lys-99 the chain carries N6-acetyllysine.

It belongs to the GroES chaperonin family. Homoheptamer arranged in a ring structure. 2 heptameric Hsp10 rings interact with a Hsp60 tetradecamer in the structure of a back-to-back double heptameric ring to form the symmetrical football complex.

It is found in the mitochondrion matrix. Co-chaperonin implicated in mitochondrial protein import and macromolecular assembly. Together with Hsp60, facilitates the correct folding of imported proteins. May also prevent misfolding and promote the refolding and proper assembly of unfolded polypeptides generated under stress conditions in the mitochondrial matrix. The functional units of these chaperonins consist of heptameric rings of the large subunit Hsp60, which function as a back-to-back double ring. In a cyclic reaction, Hsp60 ring complexes bind one unfolded substrate protein per ring, followed by the binding of ATP and association with 2 heptameric rings of the co-chaperonin Hsp10. This leads to sequestration of the substrate protein in the inner cavity of Hsp60 where, for a certain period of time, it can fold undisturbed by other cell components. Synchronous hydrolysis of ATP in all Hsp60 subunits results in the dissociation of the chaperonin rings and the release of ADP and the folded substrate protein. This Bos taurus (Bovine) protein is 10 kDa heat shock protein, mitochondrial (HSPE1).